The chain runs to 321 residues: Transaldolase (321 aa).

The active-site Schiff-base intermediate with substrate is the Lys132.

The protein belongs to the transaldolase family. Type 1 subfamily. As to quaternary structure, homodimer.

The protein localises to the cytoplasm. The enzyme catalyses D-sedoheptulose 7-phosphate + D-glyceraldehyde 3-phosphate = D-erythrose 4-phosphate + beta-D-fructose 6-phosphate. Its pathway is carbohydrate degradation; pentose phosphate pathway; D-glyceraldehyde 3-phosphate and beta-D-fructose 6-phosphate from D-ribose 5-phosphate and D-xylulose 5-phosphate (non-oxidative stage): step 2/3. Transaldolase is important for the balance of metabolites in the pentose-phosphate pathway. In Rhizobium leguminosarum bv. trifolii (strain WSM2304), this protein is Transaldolase.